Here is a 285-residue protein sequence, read N- to C-terminus: MKYIGAHVSAAGGLANAAIRAAEIDATAFALFTKNQRQWRAAPLTTQTIDEFKAACEKYHYTSAQILPHDSYLINLGHPVTEALEKSRDAFIDEMQRCEQLGLSLLNFHPGSHLMQISEEDCLARIAESINIALDKTQGVTAVIENTAGQGSNLGFKFEHLAAIIDGVEDKSRVGVCIDTCHAFAAGYDLRTPAECEKTFADFARIVGFKYLRGMHLNDAKSTFGSRVDRHHSLGEGNIGHDAFRWIMQDDRFDGIPLILETINPDIWAEEIAWLKAQQTEKAVA.

His-69, His-109, Glu-145, Asp-179, His-182, His-216, Asp-229, His-231, and Glu-261 together coordinate Zn(2+).

It belongs to the AP endonuclease 2 family. Zn(2+) is required as a cofactor.

The enzyme catalyses Endonucleolytic cleavage to 5'-phosphooligonucleotide end-products.. Its function is as follows. Endonuclease IV plays a role in DNA repair. It cleaves phosphodiester bonds at apurinic or apyrimidinic (AP) sites, generating a 3'-hydroxyl group and a 5'-terminal sugar phosphate. This is Probable endonuclease 4 from Shigella boydii serotype 4 (strain Sb227).